Here is a 722-residue protein sequence, read N- to C-terminus: Protein Aster-A (722 aa).

The segment at 1–62 (MFDTTPHSGR…KSGVSGTLST (62 aa)) is disordered. Residues 8–18 (SGRSSPSSSPS) are compositionally biased toward low complexity. The GRAM domain maps to 93–160 (EDFRKLFSKL…KEVTCLKKEK (68 aa)). The tract at residues 256–336 (ISPSGAADHS…DGPTSSLGPL (81 aa)) is disordered. Residues Ser265, Ser269, Ser273, and Ser417 each carry the phosphoserine modification. The VASt domain occupies 369 to 540 (SGRLLINSVF…ELAKAEKLSL (172 aa)). Residues 561–600 (LSWRGHRDGPQHPDPDPCTQTSMHTSGSLSSRFSEPSVDQ) form a disordered region. Residues 565-575 (GHRDGPQHPDP) are compositionally biased toward basic and acidic residues. A compositionally biased stretch (polar residues) spans 578–594 (CTQTSMHTSGSLSSRFS). A helical transmembrane segment spans residues 609-629 (ALVLISIVLIVLIALNALLFY).

Highly expressed in the brain.

It is found in the endoplasmic reticulum membrane. Its subcellular location is the cell membrane. The protein localises to the cytoplasmic vesicle. The protein resides in the autophagosome. Its function is as follows. Cholesterol transporter that mediates non-vesicular transport of cholesterol from the plasma membrane (PM) to the endoplasmic reticulum (ER). Contains unique domains for binding cholesterol and the PM, thereby serving as a molecular bridge for the transfer of cholesterol from the PM to the ER. Plays a crucial role in cholesterol homeostasis and has the unique ability to localize to the PM based on the level of membrane cholesterol. In lipid-poor conditions localizes to the ER membrane and in response to excess cholesterol in the PM is recruited to the endoplasmic reticulum-plasma membrane contact sites (EPCS) which is mediated by the GRAM domain. At the EPCS, the sterol-binding VASt/ASTER domain binds to the cholesterol in the PM and facilitates its transfer from the PM to ER. May play a role in tumor progression. Plays a role in autophagy regulation and is required for biogenesis of the autophagosome. This function in autophagy requires its cholesterol-transfer activity. This chain is Protein Aster-A, found in Mus musculus (Mouse).